The primary structure comprises 369 residues: Anhydro-N-acetylmuramic acid kinase (369 aa).

12-19 is a binding site for ATP; that stretch reads GTSLDGVD.

The protein belongs to the anhydro-N-acetylmuramic acid kinase family.

The catalysed reaction is 1,6-anhydro-N-acetyl-beta-muramate + ATP + H2O = N-acetyl-D-muramate 6-phosphate + ADP + H(+). It participates in amino-sugar metabolism; 1,6-anhydro-N-acetylmuramate degradation. Its pathway is cell wall biogenesis; peptidoglycan recycling. Its function is as follows. Catalyzes the specific phosphorylation of 1,6-anhydro-N-acetylmuramic acid (anhMurNAc) with the simultaneous cleavage of the 1,6-anhydro ring, generating MurNAc-6-P. Is required for the utilization of anhMurNAc either imported from the medium or derived from its own cell wall murein, and thus plays a role in cell wall recycling. The protein is Anhydro-N-acetylmuramic acid kinase of Escherichia coli O8 (strain IAI1).